Here is a 367-residue protein sequence, read N- to C-terminus: UDP-N-acetylglucosamine--N-acetylmuramyl-(pentapeptide) pyrophosphoryl-undecaprenol N-acetylglucosamine transferase (367 aa).

Residues 15–17 (TGG), Asn126, Arg169, Ser197, and Gln298 each bind UDP-N-acetyl-alpha-D-glucosamine.

This sequence belongs to the glycosyltransferase 28 family. MurG subfamily.

Its subcellular location is the cell inner membrane. The catalysed reaction is di-trans,octa-cis-undecaprenyl diphospho-N-acetyl-alpha-D-muramoyl-L-alanyl-D-glutamyl-meso-2,6-diaminopimeloyl-D-alanyl-D-alanine + UDP-N-acetyl-alpha-D-glucosamine = di-trans,octa-cis-undecaprenyl diphospho-[N-acetyl-alpha-D-glucosaminyl-(1-&gt;4)]-N-acetyl-alpha-D-muramoyl-L-alanyl-D-glutamyl-meso-2,6-diaminopimeloyl-D-alanyl-D-alanine + UDP + H(+). The protein operates within cell wall biogenesis; peptidoglycan biosynthesis. Cell wall formation. Catalyzes the transfer of a GlcNAc subunit on undecaprenyl-pyrophosphoryl-MurNAc-pentapeptide (lipid intermediate I) to form undecaprenyl-pyrophosphoryl-MurNAc-(pentapeptide)GlcNAc (lipid intermediate II). This chain is UDP-N-acetylglucosamine--N-acetylmuramyl-(pentapeptide) pyrophosphoryl-undecaprenol N-acetylglucosamine transferase, found in Bradyrhizobium sp. (strain ORS 278).